The sequence spans 473 residues: Putative protein TIC 214 C-terminal part (473 aa).

It belongs to the TIC214 family. Part of the Tic complex.

The protein resides in the plastid. Its subcellular location is the chloroplast. Its function is as follows. Involved in protein precursor import into chloroplasts. May be part of an intermediate translocation complex acting as a protein-conducting channel at the inner envelope. In Anthoceros angustus (Hornwort), this protein is Putative protein TIC 214 C-terminal part.